Here is a 416-residue protein sequence, read N- to C-terminus: Multifunctional CCA protein (416 aa).

ATP contacts are provided by Gly8 and Arg11. CTP is bound by residues Gly8 and Arg11. 2 residues coordinate Mg(2+): Asp21 and Asp23. ATP is bound by residues Arg91, Arg138, and Arg141. CTP contacts are provided by Arg91, Arg138, and Arg141. In terms of domain architecture, HD spans 229-331 (TGLHQELVSD…YELLQRCDAF (103 aa)).

Belongs to the tRNA nucleotidyltransferase/poly(A) polymerase family. Bacterial CCA-adding enzyme type 1 subfamily. As to quaternary structure, monomer. Can also form homodimers and oligomers. Mg(2+) serves as cofactor. Ni(2+) is required as a cofactor.

The catalysed reaction is a tRNA precursor + 2 CTP + ATP = a tRNA with a 3' CCA end + 3 diphosphate. The enzyme catalyses a tRNA with a 3' CCA end + 2 CTP + ATP = a tRNA with a 3' CCACCA end + 3 diphosphate. Its function is as follows. Catalyzes the addition and repair of the essential 3'-terminal CCA sequence in tRNAs without using a nucleic acid template. Adds these three nucleotides in the order of C, C, and A to the tRNA nucleotide-73, using CTP and ATP as substrates and producing inorganic pyrophosphate. tRNA 3'-terminal CCA addition is required both for tRNA processing and repair. Also involved in tRNA surveillance by mediating tandem CCA addition to generate a CCACCA at the 3' terminus of unstable tRNAs. While stable tRNAs receive only 3'-terminal CCA, unstable tRNAs are marked with CCACCA and rapidly degraded. This chain is Multifunctional CCA protein, found in Xylella fastidiosa (strain M23).